The chain runs to 257 residues: Snake venom serine protease salmonase (257 aa).

The first 18 residues, 1–18 (MVLIRVLVNFLILQLSYA), serve as a signal peptide directing secretion. Residues 19–24 (QKSSEL) constitute a propeptide that is removed on maturation. The 224-residue stretch at 25-248 (VIGGDECNIN…YIDWIQSIIA (224 aa)) folds into the Peptidase S1 domain. 5 cysteine pairs are disulfide-bonded: Cys-31–Cys-162, Cys-49–Cys-65, Cys-141–Cys-209, Cys-173–Cys-188, and Cys-199–Cys-224. His-64 acts as the Charge relay system in catalysis. N-linked (GlcNAc...) asparagine glycosylation is present at Asn-78. Asp-109 functions as the Charge relay system in the catalytic mechanism. Ser-203 serves as the catalytic Charge relay system.

The protein belongs to the peptidase S1 family. Snake venom subfamily. Monomer. As to expression, expressed by the venom gland.

Its subcellular location is the secreted. Functionally, snake venom serine protease that may act in the hemostasis system of the prey. The chain is Snake venom serine protease salmonase from Gloydius brevicauda (Korean slamosa snake).